A 295-amino-acid chain; its full sequence is Ribosomal RNA small subunit methyltransferase A (295 aa).

Residues N29, L31, G56, E77, D102, and N128 each coordinate S-adenosyl-L-methionine.

It belongs to the class I-like SAM-binding methyltransferase superfamily. rRNA adenine N(6)-methyltransferase family. RsmA subfamily.

The protein resides in the cytoplasm. It carries out the reaction adenosine(1518)/adenosine(1519) in 16S rRNA + 4 S-adenosyl-L-methionine = N(6)-dimethyladenosine(1518)/N(6)-dimethyladenosine(1519) in 16S rRNA + 4 S-adenosyl-L-homocysteine + 4 H(+). In terms of biological role, specifically dimethylates two adjacent adenosines (A1518 and A1519) in the loop of a conserved hairpin near the 3'-end of 16S rRNA in the 30S particle. May play a critical role in biogenesis of 30S subunits. In Listeria innocua serovar 6a (strain ATCC BAA-680 / CLIP 11262), this protein is Ribosomal RNA small subunit methyltransferase A.